The following is a 301-amino-acid chain: Putative S-adenosyl-L-methionine-dependent methyltransferase BCG_0775c (301 aa).

Residues D130 and 159 to 160 (DL) each bind S-adenosyl-L-methionine.

The protein belongs to the UPF0677 family.

Exhibits S-adenosyl-L-methionine-dependent methyltransferase activity. The polypeptide is Putative S-adenosyl-L-methionine-dependent methyltransferase BCG_0775c (Mycobacterium bovis (strain BCG / Pasteur 1173P2)).